The sequence spans 405 residues: Opine dehydrogenase (405 aa).

This sequence belongs to the lysopine/nopaline/octopine/opine/vitopine dehydrogenases family.

The protein is Opine dehydrogenase of Haliotis discus hannai (Japanese abalone).